The primary structure comprises 217 residues: 25 kDa ookinete surface antigen (217 aa).

The N-terminal stretch at Met-1–Ser-16 is a signal peptide. Residues Cys-30 to Glu-59 form the EGF-like 1; truncated domain. 3 consecutive EGF-like domains span residues Lys-61–Ile-106, Ile-106–Ser-150, and Gly-153–Thr-193. Disulfide bonds link Cys-65–Cys-80, Cys-74–Cys-92, Cys-94–Cys-105, Cys-110–Cys-120, Cys-115–Cys-133, Cys-135–Cys-149, Cys-157–Cys-168, Cys-161–Cys-177, and Cys-179–Cys-192. The N-linked (GlcNAc...) asparagine glycan is linked to Asn-112. N-linked (GlcNAc...) asparagine glycans are attached at residues Asn-165 and Asn-187. The GPI-anchor amidated serine moiety is linked to residue Ser-196. Residues Val-197–Met-217 constitute a propeptide, removed in mature form. N-linked (GlcNAc...) asparagine glycosylation occurs at Asn-202.

The protein resides in the cell membrane. This is 25 kDa ookinete surface antigen from Plasmodium reichenowi.